A 169-amino-acid chain; its full sequence is Podoplanin (169 aa).

A signal peptide spans 1 to 22; that stretch reads MWRVPVLLLVLGGAGLRVPAAG. Residues 23 to 138 lie on the Extracellular side of the membrane; it reads ASTVRPDDII…EKDGLATVTL (116 aa). O-linked (GalNAc...) threonine glycosylation is present at Thr25. Residues 37-69 form a disordered region; it reads DSVVTPGTEDSVVTPGAEDNVVTDGATEEPYES. Ser38 carries an O-linked (GalNAc...) serine glycan. 2 O-linked (GalNAc...) threonine glycosylation sites follow: Thr41 and Thr44. O-linked (GalNAc...) serine glycosylation is present at Ser47. Thr50, Thr59, Thr63, Thr72, Thr76, Thr79, Thr83, Thr92, Thr96, Thr106, Thr107, Thr108, Thr113, Thr126, and Thr127 each carry an O-linked (GalNAc...) threonine glycan. A helical membrane pass occupies residues 139–159; it reads VGIIVGVLLAIGFIGGIIIVV. A requires for dimerization and lipid rafts association region spans residues 140 to 144; that stretch reads GIIVG. At 160–169 the chain is on the cytoplasmic side; sequence ARKMSGRYSP. The interval 161-162 is requires for interaction with MSN and EZR; it reads RK.

It belongs to the podoplanin family. Homodimer. Interacts with CLEC1B; the interaction is independent of CLEC1B glycosylation and activates CLEC1B; the interaction is dependent of sialic acid on O-glycans. Interacts with CD9; this interaction is homophilic and attenuates platelet aggregation and pulmonary metastasis induced by PDPN. Interacts with LGALS8; the interaction is glycosylation-dependent; may participate in connection of the lymphatic endothelium to the surrounding extracellular matrix. Interacts with HSPA9. Interacts (via extracellular domain) with CD44; this interaction is required for PDPN-mediated directional migration and regulation of lamellipodia extension/stabilization during cell spreading and migration. Interacts (via cytoplasmic domain) with MSN and EZR; activates RHOA and promotes epithelial-mesenchymal transition. Interacts with CCL21; relocalized PDPN to the basolateral membrane. Extensively O-glycosylated. Contains sialic acid residues. O-glycosylation is necessary for platelet aggregation activity. Disialylated at Thr-59; sialic acid is critical for platelet-aggregating activity and for CLEC1B interaction. In terms of processing, the N-terminus is blocked.

Its subcellular location is the membrane. It localises to the cell projection. The protein resides in the filopodium membrane. It is found in the lamellipodium membrane. The protein localises to the microvillus membrane. Its subcellular location is the ruffle membrane. It localises to the membrane raft. The protein resides in the apical cell membrane. It is found in the basolateral cell membrane. The protein localises to the invadopodium. Its function is as follows. Mediates effects on cell migration and adhesion through its different partners. During development plays a role in blood and lymphatic vessels separation by binding CLEC1B, triggering CLEC1B activation in platelets and leading to platelet activation and/or aggregation. Interaction with CD9, on the contrary, attenuates platelet aggregation and pulmonary metastasis induced by PDPN. Mediates effects on cell migration and adhesion through its different partners. Through MSN or EZR interaction promotes epithelial-mesenchymal transition (EMT) leading to ERZ phosphorylation and triggering RHOA activation leading to cell migration increase and invasiveness. Interaction with CD44 promotes directional cell migration in epithelial and tumor cells. In lymph nodes (LNs), controls fibroblastic reticular cells (FRCs) adhesion to the extracellular matrix (ECM) and contraction of the actomyosin by maintaining ERM proteins (EZR; MSN and RDX) and MYL9 activation through association with unknown transmembrane proteins. Engagement of CLEC1B by PDPN promotes FRCs relaxation by blocking lateral membrane interactions leading to reduction of ERM proteins (EZR; MSN and RDX) and MYL9 activation. Through binding with LGALS8 may participate in connection of the lymphatic endothelium to the surrounding extracellular matrix. In keratinocytes, induces changes in cell morphology showing an elongated shape, numerous membrane protrusions, major reorganization of the actin cytoskeleton, increased motility and decreased cell adhesion. Controls invadopodia stability and maturation leading to efficient degradation of the extracellular matrix (ECM) in tumor cells through modulation of RHOC activity in order to activate ROCK1/ROCK2 and LIMK1/LIMK2 and inactivation of CFL1. Required for normal lung cell proliferation and alveolus formation at birth. Does not function as a water channel or as a regulator of aquaporin-type water channels. Does not have any effect on folic acid or amino acid transport. This is Podoplanin (PDPN) from Canis lupus familiaris (Dog).